The following is a 260-amino-acid chain: uncharacterized protein (260 aa).

The N-terminal stretch at 1–22 is a signal peptide; that stretch reads MGYIKRIGLYISIFILIVMVAG. The N-palmitoyl cysteine moiety is linked to residue Cys-23. Cys-23 carries S-diacylglycerol cysteine lipidation.

It belongs to the staphylococcal tandem lipoprotein family.

It is found in the cell membrane. This is an uncharacterized protein from Staphylococcus aureus (strain bovine RF122 / ET3-1).